The chain runs to 323 residues: Lipoyl synthase (323 aa).

The [4Fe-4S] cluster site is built by cysteine 61, cysteine 66, cysteine 72, cysteine 87, cysteine 91, cysteine 94, and serine 300. The Radical SAM core domain occupies 73–289; it reads WDKKHATFMI…ETVAYTKGFL (217 aa).

This sequence belongs to the radical SAM superfamily. Lipoyl synthase family. [4Fe-4S] cluster serves as cofactor.

The protein resides in the cytoplasm. The catalysed reaction is [[Fe-S] cluster scaffold protein carrying a second [4Fe-4S](2+) cluster] + N(6)-octanoyl-L-lysyl-[protein] + 2 oxidized [2Fe-2S]-[ferredoxin] + 2 S-adenosyl-L-methionine + 4 H(+) = [[Fe-S] cluster scaffold protein] + N(6)-[(R)-dihydrolipoyl]-L-lysyl-[protein] + 4 Fe(3+) + 2 hydrogen sulfide + 2 5'-deoxyadenosine + 2 L-methionine + 2 reduced [2Fe-2S]-[ferredoxin]. The protein operates within protein modification; protein lipoylation via endogenous pathway; protein N(6)-(lipoyl)lysine from octanoyl-[acyl-carrier-protein]: step 2/2. Its function is as follows. Catalyzes the radical-mediated insertion of two sulfur atoms into the C-6 and C-8 positions of the octanoyl moiety bound to the lipoyl domains of lipoate-dependent enzymes, thereby converting the octanoylated domains into lipoylated derivatives. This chain is Lipoyl synthase, found in Sinorhizobium medicae (strain WSM419) (Ensifer medicae).